Reading from the N-terminus, the 630-residue chain is PR domain zinc finger protein 5 (630 aa).

The 117-residue stretch at 8-124 (DRFSLKSSRV…TDTELLIGYL (117 aa)) folds into the SET domain. The C2H2-type 1 zinc finger occupies 167–190 (YACPQCESSFTSEDILAEHLQTLH). The segment at 199 to 221 (FKCKNCGKKFPVKQALQRHVLQC) adopts a C2H2-type 2; atypical zinc-finger fold. The C2H2-type 3; atypical zinc-finger motif lies at 234 to 256 (FQCSVCNSSFSSASSFEQHQETC). C2H2-type zinc fingers lie at residues 262-287 (FVCK…ENVH), 295-317 (LICS…RKIH), 320-342 (FDCQ…MITH), 348-370 (YNCE…KVIH), 376-398 (YKCK…KKTH), 404-426 (FQCE…LLIH), 432-455 (FKCH…QVVH), 461-483 (YRCE…KKTH), 489-511 (KICP…IRSH), 517-539 (YQCP…IRTH), 545-567 (YKCS…KRTH), 573-595 (FQCD…KMTH), and 602-625 (AECQ…DNIH).

It belongs to the class V-like SAM-binding methyltransferase superfamily. In terms of assembly, interacts with EHMT2/G9A, GFI1 and HDAC1. In terms of tissue distribution, widely expressed with highest levels in colon and ovary. Tends to be silenced in breast, colorectal, gastric and liver cancer tissues.

It is found in the nucleus. In terms of biological role, sequence-specific DNA-binding transcription factor. Represses transcription at least in part by recruitment of the histone methyltransferase EHMT2/G9A and histone deacetylases such as HDAC1. Regulates hematopoiesis-associated protein-coding and microRNA (miRNA) genes. May regulate the expression of proteins involved in extracellular matrix development and maintenance, including fibrillar collagens, such as COL4A1 and COL11A1, connective tissue components, such as HAPLN1, and molecules regulating cell migration and adhesion, including EDIL3 and TGFB2. May cause G2/M arrest and apoptosis in cancer cells. This Homo sapiens (Human) protein is PR domain zinc finger protein 5 (PRDM5).